Consider the following 104-residue polypeptide: Ig lambda-2 chain C region (104 aa).

The Ig-like domain maps to 6-99 (PTLTVFPPST…EGNTVEKSLS (94 aa)). An intrachain disulfide couples cysteine 27 to cysteine 85.

This is Ig lambda-2 chain C region from Rattus norvegicus (Rat).